A 321-amino-acid chain; its full sequence is Pectinesterase (321 aa).

Thr1 bears the N-acetylthreonine mark. N-linked (GlcNAc...) (complex) asparagine glycosylation occurs at Asn75. Substrate-binding residues include Thr84 and Gln114. The Proton donor role is filled by Asp137. A disulfide bond links Cys151 and Cys171. Residue Asp158 is the Nucleophile of the active site. Substrate is bound by residues Arg226 and Trp228. Residues Asn275, Asn290, and Asn319 are each glycosylated (N-linked (GlcNAc...) (complex) asparagine).

It belongs to the pectinesterase family. Post-translationally, the N-glycans attached at Asn-75, Asn-275, Asn-290 and Asn-319 are complex oligosaccharides containing xylose, fucose, hexose and N-acetylglucosamine.

The enzyme catalyses [(1-&gt;4)-alpha-D-galacturonosyl methyl ester](n) + n H2O = [(1-&gt;4)-alpha-D-galacturonosyl](n) + n methanol + n H(+). It functions in the pathway glycan metabolism; pectin degradation; 2-dehydro-3-deoxy-D-gluconate from pectin: step 1/5. Its activity is regulated as follows. Inhibited by PMEI. This chain is Pectinesterase, found in Actinidia deliciosa (Kiwi).